A 58-amino-acid chain; its full sequence is Large ribosomal subunit protein uL30 (58 aa).

This sequence belongs to the universal ribosomal protein uL30 family. As to quaternary structure, part of the 50S ribosomal subunit.

The polypeptide is Large ribosomal subunit protein uL30 (Psychromonas ingrahamii (strain DSM 17664 / CCUG 51855 / 37)).